An 832-amino-acid polypeptide reads, in one-letter code: Cadherin-17 (832 aa).

Residues 1 to 22 (MILQAHLHSLCLLMLYLATGYG) form the signal peptide. At 23-787 (QEGKFSGPLK…HQTGIPTVGM (765 aa)) the chain is on the extracellular side. 7 Cadherin domains span residues 30-128 (PLKP…TFLQ), 129-244 (SKYE…APKP), 245-340 (VEMV…PPTC), 341-449 (PSPV…IPIF), 450-566 (EKSD…APQF), 567-667 (SQHV…PPRL), and 668-777 (AKDY…RPAG). Asparagine 149, asparagine 184, asparagine 250, asparagine 419, asparagine 456, asparagine 546, asparagine 587, and asparagine 722 each carry an N-linked (GlcNAc...) asparagine glycan. A helical membrane pass occupies residues 788–808 (AVGILLTTLLVIGIILAVVFI). The Cytoplasmic segment spans residues 809-832 (RIKKDKGKDNVESAQASEVKPLRS).

Expressed in the gastrointestinal tract and pancreatic duct. Not detected in kidney, lung, liver, brain, adrenal gland and skin.

The protein localises to the cell membrane. Its function is as follows. Cadherins are calcium-dependent cell adhesion proteins. They preferentially interact with themselves in a homophilic manner in connecting cells; cadherins may thus contribute to the sorting of heterogeneous cell types. LI-cadherin may have a role in the morphological organization of liver and intestine. Involved in intestinal peptide transport. This is Cadherin-17 (CDH17) from Homo sapiens (Human).